A 968-amino-acid chain; its full sequence is MHSWKKKLVVSQLALACTLAITSQANAANYDTWTYIDNPVTALDWDHMDKAGTVDGNYVNYSGFVYYNNTNGDFDQSFNGDTVNGTISTYYLNHDYADSTANQLDISNSVIHGSITSMLPGGYYDRFDADGNNLGGYDFYTDAVVDTHWRDGDVFTLNIANTTIDDDYEALYFTDSYKDGDVTKHTNETFDTSEGVAVNLDVESNINISNNSRVAGIALSQGNTYNETYTTESHTWDNNISVKDSTVTSGSNYILDSNTYGKTGHFGNSDEPSDYAGPGDVAMSFTASGSDYAMKNNVFLSNSTLMGDVAFTSTWNSNFDPNGHDSNGDGVKDTNGGWTDDSLNVDELNLTLDNGSKWVGQAIYNVAETSAMYDVATNSLTPDATYENNDWKRVVDDKVFQSGVFNVALNNGSEWDTTGRSIVDTLTVNNGSQVNVSESKLTSDTIDLTNGSSLNIGEDGYVDTDHLTINSYSTVALTESTGWGADYNLYANTITVTNGGVLDVNVDQFDTEAFRTDKLELTSGNIADHNGNVVSGVFDIHSSDYVLNADLVNDRTWDTSKSNYGYGIVAMNSDGHLTINGNGDVDNGTELDNSSVDNVVAATGNYKVRIDNATGAGAIADYKDKEIIYVNDVNSNATFSAANKADLGAYTYQAEQRGNTVVLQQMELTDYANMALSIPSANTNIWNLEQDTVGTRLTNSRHGLADNGGAWVSYFGGNFNGDNGTINYDQDVNGIMVGVDTKIDGNNAKWIVGAAAGFAKGDMNDRSGQVDQDSQTAYIYSSAHFANNVFVDGSLSYSHFNNDLSATMSNGTYVDGSTNSDAWGFGLKAGYDFKLGDAGYVTPYGSVSGLFQSGDDYQLSNDMKVDGQSYDSMRYELGVDAGYTFTYSEDQALTPYFKLAYVYDDSNNDNDVNGDSIDNGTEGSAVRVGLGTQFSFTKNFSAYTDANYLGGGDVDQDWSANVGVKYTW.

An N-terminal signal peptide occupies residues 1–27 (MHSWKKKLVVSQLALACTLAITSQANA). The Autotransporter domain occupies 703–968 (GLADNGGAWV…SANVGVKYTW (266 aa)).

This is an uncharacterized protein from Escherichia coli (strain K12).